The primary structure comprises 228 residues: MSVTLDVRTPDGKTDGTVELPAEIFDVQANIALMHQVVVAQLAAGRQGTHATKTRGQVSGGGKKPYRQKGTGNARQGSIRAPQFTGGGTVHGPQPRDYSQRTPKKMKVAALRGALSDRVRAGQLHVVSHVVGGEQPSTKQARTAVRTWTEAKRVLVVLNKSEETSWLSLRNLQNVHLIDPSQLNTYDVLVNDDVVFTKAAFERFVAGPAKGKTAKAAATSGEAEEANQ.

2 disordered regions span residues glycine 45–threonine 102 and proline 208–glutamine 228. Residues proline 208 to glycine 221 show a composition bias toward low complexity.

The protein belongs to the universal ribosomal protein uL4 family. Part of the 50S ribosomal subunit.

Its function is as follows. One of the primary rRNA binding proteins, this protein initially binds near the 5'-end of the 23S rRNA. It is important during the early stages of 50S assembly. It makes multiple contacts with different domains of the 23S rRNA in the assembled 50S subunit and ribosome. Functionally, forms part of the polypeptide exit tunnel. This chain is Large ribosomal subunit protein uL4, found in Saccharopolyspora erythraea (strain ATCC 11635 / DSM 40517 / JCM 4748 / NBRC 13426 / NCIMB 8594 / NRRL 2338).